Consider the following 536-residue polypeptide: SNW domain-containing protein 1 (536 aa).

A disordered region spans residues 1-44 (MALTSFLPAPTQLSQDQLEAEERARSQRSLQTSLVSSRREPPPY). Alanine 2 is subject to N-acetylalanine. Serine 14 bears the Phosphoserine mark. Polar residues predominate over residues 27–36 (QRSLQTSLVS). Residues 59–79 (GDGGAFPEIHVAQYPLDMGRK) form an interaction with PPIL1 region. Glycyl lysine isopeptide (Lys-Gly) (interchain with G-Cter in SUMO2) cross-links involve residues lysine 81, lysine 97, lysine 115, lysine 122, lysine 141, lysine 158, and lysine 170. The tract at residues 174–339 (AQYIRYTPSQ…KARERRAGIK (166 aa)) is SNW. Phosphoserine is present on residues serine 182 and serine 190. Lysine 193 is covalently cross-linked (Glycyl lysine isopeptide (Lys-Gly) (interchain with G-Cter in SUMO2)). Residues 212 to 233 (FKINKKIPRGPPSPPAPVMHSP) are disordered. Phosphoserine occurs at positions 224, 232, and 234. Glycyl lysine isopeptide (Lys-Gly) (interchain with G-Cter in SUMO2) cross-links involve residues lysine 240, lysine 258, lysine 286, lysine 339, lysine 344, lysine 416, and lysine 441. Residues 311–386 (KMAQKEKEKH…RSKLQRNENR (76 aa)) form a disordered region. Serine 446 carries the phosphoserine modification. A Glycyl lysine isopeptide (Lys-Gly) (interchain with G-Cter in SUMO2) cross-link involves residue lysine 452. 2 stretches are compositionally biased toward basic and acidic residues: residues 467–489 (IKTN…RGRE) and 503–530 (KFLE…EHEG). Residues 467–536 (IKTNRFVPDK…EHEGKKRRKE (70 aa)) form a disordered region. Phosphoserine occurs at positions 479 and 481. Residue lysine 509 forms a Glycyl lysine isopeptide (Lys-Gly) (interchain with G-Cter in SUMO2) linkage.

Belongs to the SNW family. Identified in the spliceosome C complex. Associates with U4/U6-U5 tri-small nuclear ribonucleoproteins (U4/U6-U5 tri-snRNPs). Component of the minor spliceosome, which splices U12-type introns. Interacts with SKI, SMAD2,SMAD3, RBPJ, RB1, PABPN1, MAGEA1, SIRT1, FOXN3, U2AF2, PPIL1, DAXX and ATP1B4. Interacts with VDR and RXRA; preferentially associates with VDR:RXRA heterodimers. Interacts with NCOR2. Interacts with MAML1. Interacts with NOTCH1 NICD; the interaction involves multimerized NOTCH1 NICD. Forms a complex with NOTCH1 NICD and MAML1; the association is dissociated by RBPJ. Associates with positive transcription elongation factor b (P-TEFb). Component of the SNARP complex which consists at least of SNIP1, SNW1, THRAP3, BCLAF1 and PNN.

It localises to the nucleus. Functionally, involved in pre-mRNA splicing as component of the spliceosome. As a component of the minor spliceosome, involved in the splicing of U12-type introns in pre-mRNAs. Required in the specific splicing of CDKN1A pre-mRNA; the function probably involves the recruitment of U2AF2 to the mRNA. May recruit PPIL1 to the spliceosome. May be involved in cyclin-D1/CCND1 mRNA stability through the SNARP complex which associates with both the 3'end of the CCND1 gene and its mRNA. Involved in transcriptional regulation. Modulates TGF-beta-mediated transcription via association with SMAD proteins, MYOD1-mediated transcription via association with PABPN1, RB1-mediated transcriptional repression, and retinoid-X receptor (RXR)- and vitamin D receptor (VDR)-dependent gene transcription in a cell line-specific manner probably involving coactivators NCOA1 and GRIP1. Is involved in NOTCH1-mediated transcriptional activation. Binds to multimerized forms of Notch intracellular domain (NICD) and is proposed to recruit transcriptional coactivators such as MAML1 to form an intermediate preactivation complex which associates with DNA-bound CBF-1/RBPJ to form a transcriptional activation complex by releasing SNW1 and redundant NOTCH1 NICD. The polypeptide is SNW domain-containing protein 1 (Snw1) (Mus musculus (Mouse)).